The primary structure comprises 226 residues: MAPYHIRKYQDSDHRSVVDLFRRGMEEHIPATFRHMLLLPRTLLLLLGVPLTLFLASGSWLLVLLSILTLFLSLWFLAKYTWEKHVMNCLHTDMADITRTYLSSHSSCFWVAESRGQTVGMVAARPVKDPLLQKKQLQLLHLSVSLQHRREGLGKAMVRTVLQFAQMQGFSEVVLSTSMLQYAALALYQGMGFQKTGETFYTYLSRLRKSPMINLKYSLTSREGDL.

A run of 2 helical transmembrane segments spans residues 36–56 and 58–78; these read MLLLPRTLLLLLGVPLTLFLA and GSWLLVLLSILTLFLSLWFLA. The N-acetyltransferase domain occupies 61–220; the sequence is LLVLLSILTL…PMINLKYSLT (160 aa).

This sequence belongs to the camello family.

The protein resides in the nucleus membrane. The protein localises to the cytoplasm. Its subcellular location is the perinuclear region. It catalyses the reaction L-lysyl-[protein] + acetyl-CoA = N(6)-acetyl-L-lysyl-[protein] + CoA + H(+). Has histone acetyltransferase activity in vitro, with specificity for histone H4. The polypeptide is N-acetyltransferase family 8 member 3 (Mus musculus (Mouse)).